A 473-amino-acid chain; its full sequence is 3-isopropylmalate dehydratase large subunit (473 aa).

Positions 348, 413, and 416 each coordinate [4Fe-4S] cluster.

It belongs to the aconitase/IPM isomerase family. LeuC type 1 subfamily. As to quaternary structure, heterodimer of LeuC and LeuD. [4Fe-4S] cluster serves as cofactor.

It carries out the reaction (2R,3S)-3-isopropylmalate = (2S)-2-isopropylmalate. The protein operates within amino-acid biosynthesis; L-leucine biosynthesis; L-leucine from 3-methyl-2-oxobutanoate: step 2/4. Its function is as follows. Catalyzes the isomerization between 2-isopropylmalate and 3-isopropylmalate, via the formation of 2-isopropylmaleate. The chain is 3-isopropylmalate dehydratase large subunit from Parvibaculum lavamentivorans (strain DS-1 / DSM 13023 / NCIMB 13966).